A 607-amino-acid polypeptide reads, in one-letter code: Isocitrate dehydrogenase kinase/phosphatase (607 aa).

ATP is bound by residues 328 to 334 (APGIKGL) and Lys-349. Residue Asp-384 is part of the active site.

It belongs to the AceK family.

Its subcellular location is the cytoplasm. It catalyses the reaction L-seryl-[isocitrate dehydrogenase] + ATP = O-phospho-L-seryl-[isocitrate dehydrogenase] + ADP + H(+). In terms of biological role, bifunctional enzyme which can phosphorylate or dephosphorylate isocitrate dehydrogenase (IDH) on a specific serine residue. This is a regulatory mechanism which enables bacteria to bypass the Krebs cycle via the glyoxylate shunt in response to the source of carbon. When bacteria are grown on glucose, IDH is fully active and unphosphorylated, but when grown on acetate or ethanol, the activity of IDH declines drastically concomitant with its phosphorylation. The sequence is that of Isocitrate dehydrogenase kinase/phosphatase from Cupriavidus metallidurans (strain ATCC 43123 / DSM 2839 / NBRC 102507 / CH34) (Ralstonia metallidurans).